The primary structure comprises 419 residues: eIF5-mimic protein 2 (419 aa).

Met1 is subject to N-acetylmethionine. Polar residues predominate over residues 1 to 15 (MNNQKQQKPTLSGQR). Positions 1–26 (MNNQKQQKPTLSGQRFKTRKRDEKER) are disordered. Ser12 bears the Phosphoserine mark. One can recognise a W2 domain in the interval 247 to 414 (NQQTIGARKE…KNAEEESESE (168 aa)). A Glycyl lysine isopeptide (Lys-Gly) (interchain with G-Cter in SUMO2) cross-link involves residue Lys368. 2 positions are modified to phosphoserine: Ser411 and Ser413.

This sequence belongs to the BZW family.

Its function is as follows. Translation initiation regulator which represses repeat-associated non-AUG (RAN) initiated translation probably by acting as a competitive inhibitor of eukaryotic translation initiation factor 5 (EIF5) function. Enhances histone H4 gene transcription but does not seem to bind DNA directly. In Homo sapiens (Human), this protein is eIF5-mimic protein 2 (BZW1).